A 105-amino-acid polypeptide reads, in one-letter code: Large ribosomal subunit protein uL24 (105 aa).

Belongs to the universal ribosomal protein uL24 family. As to quaternary structure, part of the 50S ribosomal subunit.

One of two assembly initiator proteins, it binds directly to the 5'-end of the 23S rRNA, where it nucleates assembly of the 50S subunit. In terms of biological role, one of the proteins that surrounds the polypeptide exit tunnel on the outside of the subunit. In Aeromonas hydrophila subsp. hydrophila (strain ATCC 7966 / DSM 30187 / BCRC 13018 / CCUG 14551 / JCM 1027 / KCTC 2358 / NCIMB 9240 / NCTC 8049), this protein is Large ribosomal subunit protein uL24.